The following is a 148-amino-acid chain: Protein PLANT CADMIUM RESISTANCE 9 (148 aa).

The helical transmembrane segment at 59–78 (LAGLMVVAMSSIGCGWYYAS) threads the bilayer.

Belongs to the cornifelin family.

It is found in the membrane. In terms of biological role, may be involved in cadmium resistance. This Arabidopsis thaliana (Mouse-ear cress) protein is Protein PLANT CADMIUM RESISTANCE 9 (PCR9).